The primary structure comprises 98 residues: NADH-ubiquinone oxidoreductase chain 4L (98 aa).

3 helical membrane-spanning segments follow: residues 1-21 (MSPI…GLLI), 30-50 (LLCL…LALT), and 61-81 (IILL…LVMV).

Belongs to the complex I subunit 4L family. Core subunit of respiratory chain NADH dehydrogenase (Complex I) which is composed of 45 different subunits.

It localises to the mitochondrion inner membrane. It carries out the reaction a ubiquinone + NADH + 5 H(+)(in) = a ubiquinol + NAD(+) + 4 H(+)(out). Its function is as follows. Core subunit of the mitochondrial membrane respiratory chain NADH dehydrogenase (Complex I) which catalyzes electron transfer from NADH through the respiratory chain, using ubiquinone as an electron acceptor. Part of the enzyme membrane arm which is embedded in the lipid bilayer and involved in proton translocation. In Chrysochloris asiatica (Cape golden mole), this protein is NADH-ubiquinone oxidoreductase chain 4L (MT-ND4L).